A 316-amino-acid polypeptide reads, in one-letter code: Ribosomal RNA small subunit methyltransferase H (316 aa).

S-adenosyl-L-methionine contacts are provided by residues 35 to 37 (AGH), Asp-55, Phe-84, Asp-105, and Gln-112.

It belongs to the methyltransferase superfamily. RsmH family.

The protein localises to the cytoplasm. The enzyme catalyses cytidine(1402) in 16S rRNA + S-adenosyl-L-methionine = N(4)-methylcytidine(1402) in 16S rRNA + S-adenosyl-L-homocysteine + H(+). Specifically methylates the N4 position of cytidine in position 1402 (C1402) of 16S rRNA. In Streptococcus uberis (strain ATCC BAA-854 / 0140J), this protein is Ribosomal RNA small subunit methyltransferase H.